The chain runs to 394 residues: ILCPLEAFIVQHILTISVMGLLSCFRSTVLRKCSKGSSGMSRFLYTNNFQRNLISSGGNESYYGYFNRRSYTSLYMGTGTVGGITSARIRVPNVGCEGFMCSSHLSITQRNSRLIHSTSKIVPNSEIQNITTEMVKTPEVSRWMDQVIPTIAPCDAAEPWQLGFQDAATPIMQGIIDLHHDIFFFVIQIGVFVSWVLLRALWHFRSKMNPIPQRIVHGTTIEILWTIFPSVILMFIAIPSFALLYSMDDIVVDPAITIKAIGHQWYWTYEYSDYNNSDEQSLAFDSYMIPEDDLELGQLRLLEVDNRVVVPAKTHLRVIITSADVLHSWAVPSLGVKCDAVPGRLNQISTFIQREGVYYGQCSEICGTNHAFMPIVIEAVSTKDYGSWVSSQVN.

A mitochondrion-targeting transit peptide spans 1–119; that stretch reads ILCPLEAFIV…RNSRLIHSTS (119 aa). Topologically, residues 120 to 181 are mitochondrial intermembrane; that stretch reads KIVPNSEIQN…MQGIIDLHHD (62 aa). A helical transmembrane segment spans residues 182–198; it reads IFFFVIQIGVFVSWVLL. Residues 199–226 lie on the Mitochondrial matrix side of the membrane; that stretch reads RALWHFRSKMNPIPQRIVHGTTIEILWT. A helical membrane pass occupies residues 227-243; sequence IFPSVILMFIAIPSFAL. At 244–394 the chain is on the mitochondrial intermembrane side; it reads LYSMDDIVVD…YGSWVSSQVN (151 aa). Cu cation is bound by residues H327, C362, E364, C366, H370, and M373. A Mg(2+)-binding site is contributed by E364.

This sequence belongs to the cytochrome c oxidase subunit 2 family. In terms of assembly, component of the cytochrome c oxidase (complex IV, CIV), a multisubunit enzyme composed of a catalytic core of 3 subunits and several supernumerary subunits. The complex exists as a monomer or a dimer and forms supercomplexes (SCs) in the inner mitochondrial membrane with ubiquinol-cytochrome c oxidoreductase (cytochrome b-c1 complex, complex III, CIII). Requires Cu cation as cofactor.

The protein resides in the mitochondrion inner membrane. It carries out the reaction 4 Fe(II)-[cytochrome c] + O2 + 8 H(+)(in) = 4 Fe(III)-[cytochrome c] + 2 H2O + 4 H(+)(out). In terms of biological role, component of the cytochrome c oxidase, the last enzyme in the mitochondrial electron transport chain which drives oxidative phosphorylation. The respiratory chain contains 3 multisubunit complexes succinate dehydrogenase (complex II, CII), ubiquinol-cytochrome c oxidoreductase (cytochrome b-c1 complex, complex III, CIII) and cytochrome c oxidase (complex IV, CIV), that cooperate to transfer electrons derived from NADH and succinate to molecular oxygen, creating an electrochemical gradient over the inner membrane that drives transmembrane transport and the ATP synthase. Cytochrome c oxidase is the component of the respiratory chain that catalyzes the reduction of oxygen to water. Electrons originating from reduced cytochrome c in the intermembrane space (IMS) are transferred via the dinuclear copper A center (CU(A)) of subunit 2 and heme A of subunit 1 to the active site in subunit 1, a binuclear center (BNC) formed by heme A3 and copper B (CU(B)). The BNC reduces molecular oxygen to 2 water molecules using 4 electrons from cytochrome c in the IMS and 4 protons from the mitochondrial matrix. In Glycine max (Soybean), this protein is Cytochrome c oxidase subunit 2, mitochondrial (COX2).